Consider the following 237-residue polypeptide: Peroxisomal membrane protein 11-1 (237 aa).

The Cytoplasmic segment spans residues 1–92; it reads MSTLDATRAE…TLVLLGKSKN (92 aa). A helical membrane pass occupies residues 93–113; the sequence is ALLSTFLFLDQFVWLGRTGIY. The Lumenal segment spans residues 114–204; sequence KNKERTDRIV…VGLLQLSPKK (91 aa). The helical transmembrane segment at 205-223 threads the bilayer; the sequence is ITPRVTGAFGFVTSLISCY. Residues 224–237 lie on the Cytoplasmic side of the membrane; sequence QQLPSRAPAIKVKA.

Belongs to the peroxin-11 family. As to expression, expressed in seedlings, leaf sheaths, flag leaf, panicles and spikelets.

The protein localises to the peroxisome membrane. Involved in peroxisomal proliferation. This chain is Peroxisomal membrane protein 11-1 (PEX11-1), found in Oryza sativa subsp. japonica (Rice).